The following is a 103-amino-acid chain: Large ribosomal subunit protein bL21 (103 aa).

This sequence belongs to the bacterial ribosomal protein bL21 family. Part of the 50S ribosomal subunit. Contacts protein L20.

Functionally, this protein binds to 23S rRNA in the presence of protein L20. In Enterobacter sp. (strain 638), this protein is Large ribosomal subunit protein bL21.